The primary structure comprises 355 residues: Endonuclease III homolog (355 aa).

The short motif at 44–50 (PKKFRFQ) is the Nuclear localization signal element. The HhH domain occupies 122–149 (FQGDIPDTVEDLMTLPGVGPKMGYLCMS). The active-site Nucleophile; for N-glycosylase activity is the K142. 4 residues coordinate [4Fe-4S] cluster: C210, C217, C220, and C228. The short motif at 252–255 (KKRP) is the Nuclear localization signal element. Residues 303-355 (KEPAADIDVDQKPPVAFHSTTKETRSLRRSKRVAKKSSQYFSQQSLQDIEDLV) are disordered. The span at 338-349 (KSSQYFSQQSLQ) shows a compositional bias: polar residues.

Belongs to the Nth/MutY family. It depends on [4Fe-4S] cluster as a cofactor.

It is found in the nucleus. The protein resides in the mitochondrion. The enzyme catalyses 2'-deoxyribonucleotide-(2'-deoxyribose 5'-phosphate)-2'-deoxyribonucleotide-DNA = a 3'-end 2'-deoxyribonucleotide-(2,3-dehydro-2,3-deoxyribose 5'-phosphate)-DNA + a 5'-end 5'-phospho-2'-deoxyribonucleoside-DNA + H(+). Functionally, bifunctional DNA N-glycosylase with associated apurinic/apyrimidinic (AP) lyase function that catalyzes the first step in base excision repair (BER), the primary repair pathway for the repair of oxidative DNA damage. The DNA N-glycosylase activity releases the damaged DNA base from DNA by cleaving the N-glycosidic bond, leaving an AP site. The AP-lyase activity cleaves the phosphodiester bond 3' to the AP site by a beta-elimination. Primarily recognizes and repairs oxidative base damage of pyrimidines. Also has 8-oxo-7,8-dihydroguanine (8-oxoG) DNA glycosylase activity. Also involved in the repair of 7-methylguanine lesions, although it cannot directly repair alkylated DNA bases. Probably does so via excision of methylformamidopyrimidine (mFapy) lesions, a spontaneous processing product of 7-methylguanine. The sequence is that of Endonuclease III homolog (nth1) from Schizosaccharomyces pombe (strain 972 / ATCC 24843) (Fission yeast).